Reading from the N-terminus, the 397-residue chain is Cathepsin E (397 aa).

A signal peptide spans Met-1–Gly-20. The propeptide at Ala-21 to Glu-59 is activation peptide. The region spanning Tyr-79–Ala-393 is the Peptidase A1 domain. Asn-91 carries an N-linked (GlcNAc...) asparagine glycan. Asp-97 is a catalytic residue. Intrachain disulfides connect Cys-110-Cys-115 and Cys-273-Cys-277. Asp-282 is an active-site residue. An N-linked (GlcNAc...) asparagine glycan is attached at Asn-323.

It belongs to the peptidase A1 family. In terms of assembly, homodimer; disulfide-linked. Post-translationally, glycosylated. The nature of the carbohydrate chain varies between cell types. In fibroblasts, the proenzyme contains a high mannose-type oligosaccharide, while the mature enzyme contains a complex-type oligosaccharide. Expressed abundantly in the stomach, club cells and alveolar macrophages of the lung, brain microglia, spleen and activated B-lymphocytes. Not expressed in resting B-lymphocytes.

The protein localises to the endosome. It carries out the reaction Similar to cathepsin D, but slightly broader specificity.. Functionally, may have a role in immune function. Probably involved in the processing of antigenic peptides during MHC class II-mediated antigen presentation. May play a role in activation-induced lymphocyte depletion in the thymus, and in neuronal degeneration and glial cell activation in the brain. In Mus musculus (Mouse), this protein is Cathepsin E (Ctse).